The following is a 165-amino-acid chain: Type 3 secretion system regulator YopR (165 aa).

This sequence belongs to the YopR family.

It localises to the secreted. Functionally, may be involved in the regulation of the assembly of the type III secretion system (T3SS), also called injectisome, which is used to inject bacterial effector proteins into eukaryotic host cells. May control the secretion and/or polymerization of YscF/SctF, the principal component of the needle filament, thereby impacting the assembly of the T3SS. Involved in pathogenesis. The sequence is that of Type 3 secretion system regulator YopR from Yersinia pseudotuberculosis serotype I (strain IP32953).